The primary structure comprises 520 residues: MSKQGNFQKSMSLFDLILIGMGAIFGSAWLFAVSNVASKAGPSGAFSWILGGAIILLIGLVYAELGAALPRTGGIIRYPVYSHGHLVGYLISFVTIVAYTSLISIEVTAVRQYVAYWFPGLTIKGSDSPTISGWILQFALLCLFFLLNYWSVKTFAKANFIISIFKYIVPITIIIVLIFHFQPENLSVQGFAPFGFTGIQAAISTGGVMFAYLGLHPIVSVAGEVQNPKRNIPIALIICIIVSTIIYTVLQVTFIGAIPTETLKHGWPAIGREFSLPFKDIAVMLGLGWLATLVILDAILSPGGNGNIFMNTTSRLVYAWARNGTLFGIFSKVNKDTGTPRASLWLSFALSIFWTLPFPSWNALVNVCSVALILSYAIAPISSAALRVNAKDLNRPFYLKGMSIIGPLSFIFTAFIVYWSGWKTVSWLLGSQLVMFLIYLCFSKYTPKEDVSLAQQLKSAWWLIGFYIMMLIFSYIGSFGHGLGIISNPVDLILVAIGSLAIYYWAKYTGLPKAAIDYDK.

A run of 14 helical transmembrane segments spans residues 13–33, 49–69, 85–105, 130–150, 161–181, 201–221, 232–252, 281–301, 345–365, 366–386, 402–422, 425–445, 460–480, and 482–502; these read LFDLILIGMGAIFGSAWLFAV, ILGGAIILLIGLVYAELGAAL, HLVGYLISFVTIVAYTSLISI, TISGWILQFALLCLFFLLNYW, IISIFKYIVPITIIIVLIFHF, AAISTGGVMFAYLGLHPIVSV, IPIALIICIIVSTIIYTVLQV, IAVMLGLGWLATLVILDAILS, WLSFALSIFWTLPFPSWNALV, NVCSVALILSYAIAPISSAAL, MSIIGPLSFIFTAFIVYWSGW, VSWLLGSQLVMFLIYLCFSKY, AWWLIGFYIMMLIFSYIGSFG, and GLGIISNPVDLILVAIGSLAI.

Belongs to the amino acid-polyamine-organocation (APC) superfamily. AGT (TC 2.A.3.11) family.

The protein resides in the cell membrane. In terms of biological role, uptake of L-aspartate with the concomitant import of a proton. Can also transport aspartate hydroxamate and L-glutamate with lower affinity and efficiency. The protein is Aspartate-proton symporter (yveA) of Bacillus subtilis (strain 168).